Consider the following 191-residue polypeptide: Ribosome maturation factor RimM (191 aa).

Residues 99–172 form the PRC barrel domain; that stretch reads TDEFYQIDLI…FLVVDPVAAG (74 aa).

The protein belongs to the RimM family. As to quaternary structure, binds ribosomal protein uS19.

The protein resides in the cytoplasm. Its function is as follows. An accessory protein needed during the final step in the assembly of 30S ribosomal subunit, possibly for assembly of the head region. Essential for efficient processing of 16S rRNA. May be needed both before and after RbfA during the maturation of 16S rRNA. It has affinity for free ribosomal 30S subunits but not for 70S ribosomes. In Bartonella bacilliformis (strain ATCC 35685 / KC583 / Herrer 020/F12,63), this protein is Ribosome maturation factor RimM.